The chain runs to 464 residues: tRNA modification GTPase MnmE (464 aa).

R26, E92, and R131 together coordinate (6S)-5-formyl-5,6,7,8-tetrahydrofolate. The region spanning 227 to 385 is the TrmE-type G domain; the sequence is GIKVAILGRV…LISALKDYVS (159 aa). N237 contacts K(+). Residues 237 to 242, 256 to 262, and 281 to 284 contribute to the GTP site; these read NAGKSS, SNIAGTT, and DTAG. S241 provides a ligand contact to Mg(2+). The K(+) site is built by S256, I258, and T261. T262 contacts Mg(2+). Residue K464 coordinates (6S)-5-formyl-5,6,7,8-tetrahydrofolate.

The protein belongs to the TRAFAC class TrmE-Era-EngA-EngB-Septin-like GTPase superfamily. TrmE GTPase family. In terms of assembly, homodimer. Heterotetramer of two MnmE and two MnmG subunits. K(+) serves as cofactor.

The protein localises to the cytoplasm. Exhibits a very high intrinsic GTPase hydrolysis rate. Involved in the addition of a carboxymethylaminomethyl (cmnm) group at the wobble position (U34) of certain tRNAs, forming tRNA-cmnm(5)s(2)U34. This chain is tRNA modification GTPase MnmE, found in Brachyspira hyodysenteriae (strain ATCC 49526 / WA1).